A 943-amino-acid polypeptide reads, in one-letter code: Translation initiation factor IF-2 (943 aa).

Disordered stretches follow at residues 96 to 229 and 243 to 352; these read FIKR…ERRR and AAPK…QRQQ. A compositionally biased stretch (low complexity) spans 104-116; it reads DAPSDAAESAPSA. Composition is skewed to basic and acidic residues over residues 120–163 and 171–229; these read ELVR…EERA and AEKK…ERRR. Low complexity predominate over residues 278–293; that stretch reads ATGSGTGARAAAPSAP. Over residues 313 to 323 the composition is skewed to basic and acidic residues; the sequence is TTKKKEIKTRG. The tr-type G domain occupies 443 to 612; that stretch reads SRAPVVTVMG…LLQAEVLELK (170 aa). The G1 stretch occupies residues 452–459; it reads GHVDHGKT. GTP is bound at residue 452 to 459; the sequence is GHVDHGKT. Residues 477–481 are G2; sequence GITQH. Residues 498 to 501 are G3; that stretch reads DTPG. Residues 498–502 and 552–555 each bind GTP; these read DTPGH and TKAD. Residues 552–555 form a G4 region; that stretch reads TKAD. A G5 region spans residues 588–590; it reads SSK.

The protein belongs to the TRAFAC class translation factor GTPase superfamily. Classic translation factor GTPase family. IF-2 subfamily.

The protein resides in the cytoplasm. In terms of biological role, one of the essential components for the initiation of protein synthesis. Protects formylmethionyl-tRNA from spontaneous hydrolysis and promotes its binding to the 30S ribosomal subunits. Also involved in the hydrolysis of GTP during the formation of the 70S ribosomal complex. The polypeptide is Translation initiation factor IF-2 (Acidovorax sp. (strain JS42)).